Consider the following 165-residue polypeptide: MSRVALYPGSFDPVTNGHVDVVRHAVVLCDQLIVAIGVHPGKTPLFPAGERLAMVRSVFAPVAEKAGCAFDCTTYDDLTVAAAQKAGATILIRGLRDGTDLDYEMQIAGMNETMAPGVHTVFVPASPGVRPITATLVRQIAAMGGDVSAFVPQSVASSLKTKFAG.

Substrate is bound at residue serine 10. Residues 10 to 11 and histidine 18 each bind ATP; that span reads SF. Residues lysine 42, threonine 79, and arginine 93 each contribute to the substrate site. ATP-binding positions include 94-96, glutamate 104, and 129-135; these read GLR and VRPITAT.

This sequence belongs to the bacterial CoaD family. As to quaternary structure, homohexamer. Requires Mg(2+) as cofactor.

The protein localises to the cytoplasm. The catalysed reaction is (R)-4'-phosphopantetheine + ATP + H(+) = 3'-dephospho-CoA + diphosphate. It functions in the pathway cofactor biosynthesis; coenzyme A biosynthesis; CoA from (R)-pantothenate: step 4/5. Its function is as follows. Reversibly transfers an adenylyl group from ATP to 4'-phosphopantetheine, yielding dephospho-CoA (dPCoA) and pyrophosphate. The chain is Phosphopantetheine adenylyltransferase from Nitrobacter hamburgensis (strain DSM 10229 / NCIMB 13809 / X14).